We begin with the raw amino-acid sequence, 67 residues long: MGMRMMFTVFLLVALATTVVSFTSDRASDRRNAAVKAFDLISSTVKKGCCSHPACSGNNPEYCRQGR.

A signal peptide spans 1 to 21 (MGMRMMFTVFLLVALATTVVS). Residues 22 to 47 (FTSDRASDRRNAAVKAFDLISSTVKK) constitute a propeptide that is removed on maturation. 2 cysteine pairs are disulfide-bonded: Cys49–Cys55 and Cys50–Cys63. Glutamine amide is present on Gln65.

Belongs to the conotoxin A superfamily. As to expression, expressed by the venom duct.

It is found in the secreted. Functionally, alpha-conotoxins act on postsynaptic membranes, they bind to the nicotinic acetylcholine receptors (nAChR) and thus inhibit them. Globular isomer (C1-C3; C2-C4) selectively inhibits neuronal (non-muscle) nAChR subtypes particularly human alpha-3-beta-2/CHRNA3-CHRNB2 (IC(50)=35.7 nM) and alpha-9-alpha-10/CHRNA9-CHRNA10 nAChRs (IC(50)=569 nM), while the ribbon isomer (C1-C4; C2-C3) shows weak inhibition on alpha-3-beta-2/CHRNA3-CHRNB2, but not on all other receptors tested. This chain is Alpha-conotoxin G1.5, found in Conus geographus (Geography cone).